Here is a 261-residue protein sequence, read N- to C-terminus: 4-phosphopantoate--beta-alanine ligase (261 aa).

Residues Arg17, Arg39, Asp181–Leu182, Arg187–Ser188, and Asn199–Ile200 contribute to the ATP site.

Belongs to the archaeal phosphopantothenate synthetase family. In terms of assembly, homodimer.

It carries out the reaction (R)-4-phosphopantoate + beta-alanine + ATP = (R)-4'-phosphopantothenate + AMP + diphosphate + H(+). Its pathway is cofactor biosynthesis; coenzyme A biosynthesis. In terms of biological role, catalyzes the condensation of (R)-4-phosphopantoate and beta-alanine to 4'-phosphopantothenate in the CoA biosynthesis pathway. This Thermococcus onnurineus (strain NA1) protein is 4-phosphopantoate--beta-alanine ligase.